The sequence spans 150 residues: D-aminoacyl-tRNA deacylase (150 aa).

Positions 138–139 (GP) match the Gly-cisPro motif, important for rejection of L-amino acids motif.

Belongs to the DTD family. As to quaternary structure, homodimer.

It is found in the cytoplasm. The catalysed reaction is glycyl-tRNA(Ala) + H2O = tRNA(Ala) + glycine + H(+). It catalyses the reaction a D-aminoacyl-tRNA + H2O = a tRNA + a D-alpha-amino acid + H(+). In terms of biological role, an aminoacyl-tRNA editing enzyme that deacylates mischarged D-aminoacyl-tRNAs. Also deacylates mischarged glycyl-tRNA(Ala), protecting cells against glycine mischarging by AlaRS. Acts via tRNA-based rather than protein-based catalysis; rejects L-amino acids rather than detecting D-amino acids in the active site. By recycling D-aminoacyl-tRNA to D-amino acids and free tRNA molecules, this enzyme counteracts the toxicity associated with the formation of D-aminoacyl-tRNA entities in vivo and helps enforce protein L-homochirality. The sequence is that of D-aminoacyl-tRNA deacylase from Chromobacterium violaceum (strain ATCC 12472 / DSM 30191 / JCM 1249 / CCUG 213 / NBRC 12614 / NCIMB 9131 / NCTC 9757 / MK).